A 250-amino-acid polypeptide reads, in one-letter code: 2-(R)-hydroxypropyl-CoM dehydrogenase (250 aa).

NAD(+) contacts are provided by residues 12–14 (SGN), Asp-33, 60–61 (DV), and Asn-87. Arg-152 contributes to the 2-oxopropyl-coenzyme M binding site. Catalysis depends on Tyr-155, which acts as the Proton acceptor. 188 to 192 (IETPM) lines the NAD(+) pocket. 195-196 (WR) contacts 2-oxopropyl-coenzyme M.

The protein belongs to the short-chain dehydrogenases/reductases (SDR) family. As to quaternary structure, homodimer in solution. Homotetramer. Component III of the aliphatic epoxide carboxylation complex together with components I, II and IV.

It carries out the reaction (R)-2-hydroxypropyl-coenzyme M + NAD(+) = 2-oxopropyl-coenzyme M + NADH + H(+). It participates in alkene metabolism; propylene degradation. Inhibited by the arginine-specific modifiers 2,3-butanedione and phenylglyoxal. 2-(2-methyl-2-hydroxypropylthio)ethanesulfonate (M-HPC), an achiral analog of both R-HPC and S-HPC, and (2S)-2-hydroxypropyl-coenzyme M (S-HPC) are competitive inhibitors. Inhibited (at 70%) by the coenzyme M analog 2-bromoethanesulfonate (BES). In terms of biological role, involved in aliphatic epoxide carboxylation. Catalyzes the reversible oxidation of (R)-2-hydroxypropyl-coenzyme M (R-HPC) to 2-oxopropyl-coenzyme M (2-KPC). The enzyme is highly specific for the R enantiomers. In vitro can also use achiral 2-propanol and short-chain (R)- and (S)-2-alkanols. The chain is 2-(R)-hydroxypropyl-CoM dehydrogenase from Xanthobacter autotrophicus (strain ATCC BAA-1158 / Py2).